The primary structure comprises 212 residues: Pyrrolidone-carboxylate peptidase (212 aa).

Catalysis depends on residues Glu80, Cys143, and His165.

It belongs to the peptidase C15 family. As to quaternary structure, homotetramer.

The protein resides in the cytoplasm. It catalyses the reaction Release of an N-terminal pyroglutamyl group from a polypeptide, the second amino acid generally not being Pro.. Its function is as follows. Removes 5-oxoproline from various penultimate amino acid residues except L-proline. The chain is Pyrrolidone-carboxylate peptidase from Vibrio vulnificus (strain CMCP6).